A 466-amino-acid chain; its full sequence is ATP synthase subunit beta (466 aa).

155-162 (GGAGVGKT) provides a ligand contact to ATP.

It belongs to the ATPase alpha/beta chains family. In terms of assembly, F-type ATPases have 2 components, CF(1) - the catalytic core - and CF(0) - the membrane proton channel. CF(1) has five subunits: alpha(3), beta(3), gamma(1), delta(1), epsilon(1). CF(0) has three main subunits: a(1), b(2) and c(9-12). The alpha and beta chains form an alternating ring which encloses part of the gamma chain. CF(1) is attached to CF(0) by a central stalk formed by the gamma and epsilon chains, while a peripheral stalk is formed by the delta and b chains.

It localises to the cell inner membrane. The catalysed reaction is ATP + H2O + 4 H(+)(in) = ADP + phosphate + 5 H(+)(out). In terms of biological role, produces ATP from ADP in the presence of a proton gradient across the membrane. The catalytic sites are hosted primarily by the beta subunits. The polypeptide is ATP synthase subunit beta (Bordetella bronchiseptica (strain ATCC BAA-588 / NCTC 13252 / RB50) (Alcaligenes bronchisepticus)).